A 200-amino-acid chain; its full sequence is Recombination protein RecR (200 aa).

A C4-type zinc finger spans residues 58–75 (CPTCFCLKSHPESVCSFC). A Toprim domain is found at 82 to 177 (SILCIVATPK…SVSRLALGLP (96 aa)).

The protein belongs to the RecR family.

In terms of biological role, may play a role in DNA repair. It seems to be involved in an RecBC-independent recombinational process of DNA repair. It may act with RecF and RecO. This is Recombination protein RecR from Chlamydia abortus (strain DSM 27085 / S26/3) (Chlamydophila abortus).